Consider the following 300-residue polypeptide: Haloalkane dehalogenase (300 aa).

Residues 32 to 155 (AIVFQHGNPT…PAVRGVFQGF (124 aa)) enclose the AB hydrolase-1 domain. Residue Asp109 is the Nucleophile of the active site. Catalysis depends on Glu133, which acts as the Proton donor. His273 (proton acceptor) is an active-site residue.

It belongs to the haloalkane dehalogenase family. Type 2 subfamily. In terms of assembly, monomer.

The catalysed reaction is 1-haloalkane + H2O = a halide anion + a primary alcohol + H(+). Catalyzes hydrolytic cleavage of carbon-halogen bonds in halogenated aliphatic compounds, leading to the formation of the corresponding primary alcohols, halide ions and protons. The polypeptide is Haloalkane dehalogenase (Mycobacterium bovis (strain BCG / Pasteur 1173P2)).